The chain runs to 182 residues: Oligoribonuclease (182 aa).

The Exonuclease domain maps to 8-171; the sequence is LLWLDMEMTG…ADIYESIDEL (164 aa). The active site involves Tyr-129.

This sequence belongs to the oligoribonuclease family.

It localises to the cytoplasm. Functionally, 3'-to-5' exoribonuclease specific for small oligoribonucleotides. This Thiobacillus denitrificans (strain ATCC 25259 / T1) protein is Oligoribonuclease.